The following is a 311-amino-acid chain: MPLRLIFMGTPDFSVPTLLELVAHGHEIVAVYTRAPKPGGRRGLQLQPTPVEEAARRLGVPVLTPKTLKTEEALEEFRAFDADAAVVVAYGMILPQAILDAPKLGCYNLHASLLPRWRGAAPINRAIMADDAESGVMVMKMDVGLDTGDVAMAERLAITDTMTAADLHDRLSRLGADLMVRAMAALDRGGLQLKKQSEDGVTYAAKIDKAEARIDWTKPARAVLRHIHGLSPFPGAWAELAGVSENARVKILRCELAKGSGAPGEVLDDQLTIACGEGAIRIIELQREGKARMQATDFLRGVPLKAGAKFT.

112–115 serves as a coordination point for (6S)-5,6,7,8-tetrahydrofolate; the sequence is SLLP.

The protein belongs to the Fmt family.

The enzyme catalyses L-methionyl-tRNA(fMet) + (6R)-10-formyltetrahydrofolate = N-formyl-L-methionyl-tRNA(fMet) + (6S)-5,6,7,8-tetrahydrofolate + H(+). In terms of biological role, attaches a formyl group to the free amino group of methionyl-tRNA(fMet). The formyl group appears to play a dual role in the initiator identity of N-formylmethionyl-tRNA by promoting its recognition by IF2 and preventing the misappropriation of this tRNA by the elongation apparatus. The chain is Methionyl-tRNA formyltransferase from Bradyrhizobium diazoefficiens (strain JCM 10833 / BCRC 13528 / IAM 13628 / NBRC 14792 / USDA 110).